The chain runs to 456 residues: Adenylosuccinate lyase (456 aa).

Residues 15-16 (RY), 90-92 (NHD), and 122-123 (TS) each bind N(6)-(1,2-dicarboxyethyl)-AMP. His171 serves as the catalytic Proton donor/acceptor. Gln248 serves as a coordination point for N(6)-(1,2-dicarboxyethyl)-AMP. Catalysis depends on Ser296, which acts as the Proton donor/acceptor. N(6)-(1,2-dicarboxyethyl)-AMP-binding positions include Ser297, 302-304 (KVN), Asn310, Arg336, and 341-345 (STVLR).

This sequence belongs to the lyase 1 family. Adenylosuccinate lyase subfamily. As to quaternary structure, homotetramer. Residues from neighboring subunits contribute catalytic and substrate-binding residues to each active site.

The catalysed reaction is N(6)-(1,2-dicarboxyethyl)-AMP = fumarate + AMP. The enzyme catalyses (2S)-2-[5-amino-1-(5-phospho-beta-D-ribosyl)imidazole-4-carboxamido]succinate = 5-amino-1-(5-phospho-beta-D-ribosyl)imidazole-4-carboxamide + fumarate. It participates in purine metabolism; AMP biosynthesis via de novo pathway; AMP from IMP: step 2/2. It functions in the pathway purine metabolism; IMP biosynthesis via de novo pathway; 5-amino-1-(5-phospho-D-ribosyl)imidazole-4-carboxamide from 5-amino-1-(5-phospho-D-ribosyl)imidazole-4-carboxylate: step 2/2. Its function is as follows. Catalyzes two reactions in de novo purine nucleotide biosynthesis. Catalyzes the breakdown of 5-aminoimidazole- (N-succinylocarboxamide) ribotide (SAICAR or 2-[5-amino-1-(5-phospho-beta-D-ribosyl)imidazole-4-carboxamido]succinate) to 5-aminoimidazole-4-carboxamide ribotide (AICAR or 5-amino-1-(5-phospho-beta-D-ribosyl)imidazole-4-carboxamide) and fumarate, and of adenylosuccinate (ADS or N(6)-(1,2-dicarboxyethyl)-AMP) to adenosine monophosphate (AMP) and fumarate. The chain is Adenylosuccinate lyase (purB) from Pseudomonas aeruginosa (strain ATCC 15692 / DSM 22644 / CIP 104116 / JCM 14847 / LMG 12228 / 1C / PRS 101 / PAO1).